The following is a 146-amino-acid chain: Putative pre-16S rRNA nuclease (146 aa).

This sequence belongs to the YqgF nuclease family.

It is found in the cytoplasm. In terms of biological role, could be a nuclease involved in processing of the 5'-end of pre-16S rRNA. The protein is Putative pre-16S rRNA nuclease of Dechloromonas aromatica (strain RCB).